Consider the following 261-residue polypeptide: 3beta-hydroxysteroid dehydrogenase 1 (261 aa).

NAD(+) is bound by residues Asp-65–Val-66, Asn-92, Tyr-158, and Lys-162. Residue Tyr-158 is the Proton acceptor of the active site.

This sequence belongs to the short-chain dehydrogenases/reductases (SDR) family.

It carries out the reaction 3-oxo-5beta-cholan-24-oate + NADH + H(+) = isolithocholate + NAD(+). It catalyses the reaction 12alpha-hydroxy-3-oxo-5beta-cholan-24-oate + NADH + H(+) = isodeoxycholate + NAD(+). The enzyme catalyses 7alpha,12alpha-dihydroxy-3-oxo-5beta-cholan-24-oate + NADH + H(+) = isocholate + NAD(+). The catalysed reaction is 3-oxochenodeoxycholate + NADH + H(+) = isochenodeoxycholate + NAD(+). Involved in the modification of secondary bile acids into iso-bile acids (3beta-bile acids) via epimerization of the 3-OH group through a 3-oxo-intermediate. Catalyzes the reduction of 12-alpha-hydroxy-3-oxo-5-beta-cholan-24-oate (3-oxo-DCA) and 3-oxo-5-beta-cholan-24-oate (3-oxo-LCA) to yield isodeoxycholate (isoDCA) and isolithocholate (isoLCA), respectively. Is also able to catalyze the reduction of 3-dehydrocholate (3-oxo-CA or 7alpha,12alpha-dihydroxy-3-oxo-5beta-cholan-24-oate) and 7-alpha-hydroxy-3-oxo-5-beta-cholan-24-oate (3-oxo-CDCA), into isocholate (isoCA) and isochenodeoxycholate (isoCDCA), respectively. Prefers NADH to NADPH as cosubstrate. The conversion of the abundant bile acid deoxycholate (DCA) into isoDCA by the gut bacterium E.lenta favors the growth of the keystone commensal genus Bacteroides, since isoDCA is less cytotoxic than its parent compound, DCA; iso-bile acids have thus a potential role in modulating gut community composition. The protein is 3beta-hydroxysteroid dehydrogenase 1 of Eggerthella lenta (strain ATCC 25559 / DSM 2243 / CCUG 17323 / JCM 9979 / KCTC 3265 / NCTC 11813 / VPI 0255 / 1899 B) (Eubacterium lentum).